The primary structure comprises 116 residues: Ly-6/neurotoxin-like protein 1 (116 aa).

The first 20 residues, 1 to 20, serve as a signal peptide directing secretion; sequence MTPLLTLFLVALIGLPLAQA. A UPAR/Ly6 domain is found at 21–105; sequence LDCHVCAYNG…FAAPATLALA (85 aa). Cystine bridges form between cysteine 23–cysteine 46, cysteine 26–cysteine 33, cysteine 39–cysteine 64, cysteine 68–cysteine 85, and cysteine 86–cysteine 91. Asparagine 92 carries GPI-anchor amidated asparagine lipidation. The propeptide at 93–116 is removed in mature form; that stretch reads GAGFAAPATLALAPILLATLWGLL.

As to quaternary structure, interacts with nAChRs containing alpha-4:beta-2 (CHRNA4:CHRNB2) and alpha-7 (CHRNA7) subunits. Interacts with CHRNA4 probably in the endoplasmic reticulum prior to nAChR pentameric assembly. Interacts with KCNA2/Potassium voltage-gated channel subfamily A member 2.

Its subcellular location is the cell membrane. It localises to the cell projection. The protein localises to the dendrite. It is found in the endoplasmic reticulum. In terms of biological role, acts in different tissues through interaction to nicotinic acetylcholine receptors (nAChRs). The proposed role as modulator of nAChR activity seems to be dependent on the nAChR subtype and stoichiometry, and to involve an effect on nAChR trafficking and its cell surface expression, and on single channel properties of the nAChR inserted in the plasma membrane. Modulates functional properties of nicotinic acetylcholine receptors (nAChRs) to prevent excessive excitation, and hence neurodegeneration. Enhances desensitization by increasing both the rate and extent of desensitization of alpha-4:beta-2-containing nAChRs and slowing recovery from desensitization. Promotes large amplitude ACh-evoked currents through alpha-4:beta-2 nAChRs. Is involved in regulation of the nAChR pentameric assembly in the endoplasmic reticulum. Shifts stoichiometry from high sensitivity alpha-4(2):beta-2(3) to low sensitivity alpha-4(3):beta-2(2) nAChR. In vitro modulates alpha-3:beta-4-containing nAChRs. Reduces cell surface expression of (alpha-3:beta-4)(2):beta-4 and (alpha-3:beta-4)(2):alpha-5 nAChRs suggesting an interaction with nAChR alpha-3(-):(+)beta-4 subunit interfaces and an allosteric mode. Corresponding single channel effects characterized by decreased unitary conductance, altered burst proportions and enhanced desensitization/inactivation seem to depend on nAChR alpha:alpha subunit interfaces and are greater in (alpha-3:beta-2)(2):alpha-3 when compared to (alpha-3:beta-2)(2):alpha-5 nAChRs. Prevents plasticity in the primary visual cortex late in life. This chain is Ly-6/neurotoxin-like protein 1, found in Saimiri boliviensis boliviensis (Bolivian squirrel monkey).